The chain runs to 666 residues: DNA mismatch repair protein MutL (666 aa).

It belongs to the DNA mismatch repair MutL/HexB family.

Functionally, this protein is involved in the repair of mismatches in DNA. It is required for dam-dependent methyl-directed DNA mismatch repair. May act as a 'molecular matchmaker', a protein that promotes the formation of a stable complex between two or more DNA-binding proteins in an ATP-dependent manner without itself being part of a final effector complex. This is DNA mismatch repair protein MutL from Clostridium botulinum (strain Kyoto / Type A2).